We begin with the raw amino-acid sequence, 126 residues long: uncharacterized protein (126 aa).

A signal peptide spans 1-27; that stretch reads MKNLFIFLSLMMMFVLTACGGSKYDDA. Positions 93-126 are disordered; sequence MTDMPGNGENDRLGLSKKTPDYEEVKGEETELEE. The segment covering 101–126 has biased composition (basic and acidic residues); the sequence is ENDRLGLSKKTPDYEEVKGEETELEE.

This is an uncharacterized protein from Bacillus subtilis (strain 168).